We begin with the raw amino-acid sequence, 243 residues long: 1-(5-phosphoribosyl)-5-[(5-phosphoribosylamino)methylideneamino] imidazole-4-carboxamide isomerase (243 aa).

Residue aspartate 8 is the Proton acceptor of the active site. The Proton donor role is filled by aspartate 129.

It belongs to the HisA/HisF family.

Its subcellular location is the cytoplasm. It carries out the reaction 1-(5-phospho-beta-D-ribosyl)-5-[(5-phospho-beta-D-ribosylamino)methylideneamino]imidazole-4-carboxamide = 5-[(5-phospho-1-deoxy-D-ribulos-1-ylimino)methylamino]-1-(5-phospho-beta-D-ribosyl)imidazole-4-carboxamide. It participates in amino-acid biosynthesis; L-histidine biosynthesis; L-histidine from 5-phospho-alpha-D-ribose 1-diphosphate: step 4/9. In Brucella suis biovar 1 (strain 1330), this protein is 1-(5-phosphoribosyl)-5-[(5-phosphoribosylamino)methylideneamino] imidazole-4-carboxamide isomerase.